A 347-amino-acid polypeptide reads, in one-letter code: Transcription elongation factor A protein 3 (347 aa).

One can recognise a TFIIS N-terminal domain in the interval glutamate 5–proline 82. Over residues arginine 83–glycine 100 the composition is skewed to basic and acidic residues. The disordered stretch occupies residues arginine 83 to threonine 168. Phosphoserine is present on serine 113. Residues glycine 119–aspartate 131 show a composition bias toward basic and acidic residues. Composition is skewed to low complexity over residues serine 132–arginine 142 and threonine 157–threonine 168. Serine 139 carries the post-translational modification Phosphoserine. The region spanning valine 186–threonine 302 is the TFIIS central domain. A TFIIS-type zinc finger spans residues aspartate 305 to lysine 345. Residues cysteine 309, cysteine 312, cysteine 337, and cysteine 340 each contribute to the Zn(2+) site.

Belongs to the TFS-II family. Liver, kidney and heart.

It localises to the nucleus. Functionally, necessary for efficient RNA polymerase II transcription elongation past template-encoded arresting sites. The arresting sites in DNA have the property of trapping a certain fraction of elongating RNA polymerases that pass through, resulting in locked ternary complexes. Cleavage of the nascent transcript by S-II allows the resumption of elongation from the new 3'-terminus. The polypeptide is Transcription elongation factor A protein 3 (Tcea3) (Mus musculus (Mouse)).